Consider the following 432-residue polypeptide: Trigger factor (432 aa).

A PPIase FKBP-type domain is found at 161 to 246 (EDRVTIDFTG…LKKVEERELP (86 aa)).

It belongs to the FKBP-type PPIase family. Tig subfamily. Homodimer and monomer. In vivo most of the ribosomes are in complex with monomeric TF. Uncomplexed TF, however, is in a monomer-dimer equilibrium with approximately two thirds of TF existing in a dimeric state.

The protein resides in the cytoplasm. It carries out the reaction [protein]-peptidylproline (omega=180) = [protein]-peptidylproline (omega=0). Involved in protein export. Acts as a chaperone by maintaining the newly synthesized protein in an open conformation. Functions as a peptidyl-prolyl cis-trans isomerase. This Escherichia fergusonii (strain ATCC 35469 / DSM 13698 / CCUG 18766 / IAM 14443 / JCM 21226 / LMG 7866 / NBRC 102419 / NCTC 12128 / CDC 0568-73) protein is Trigger factor.